Consider the following 431-residue polypeptide: 3-phosphoshikimate 1-carboxyvinyltransferase (431 aa).

Lys-21, Ser-22, and Arg-26 together coordinate 3-phosphoshikimate. Lys-21 is a binding site for phosphoenolpyruvate. Positions 93 and 121 each coordinate phosphoenolpyruvate. 3-phosphoshikimate contacts are provided by Ser-166, Gln-168, Asp-318, and Lys-345. Residue Gln-168 coordinates phosphoenolpyruvate. Catalysis depends on Asp-318, which acts as the Proton acceptor. Residues Arg-349 and Arg-391 each coordinate phosphoenolpyruvate.

It belongs to the EPSP synthase family. Monomer.

It localises to the cytoplasm. The catalysed reaction is 3-phosphoshikimate + phosphoenolpyruvate = 5-O-(1-carboxyvinyl)-3-phosphoshikimate + phosphate. It participates in metabolic intermediate biosynthesis; chorismate biosynthesis; chorismate from D-erythrose 4-phosphate and phosphoenolpyruvate: step 6/7. Its function is as follows. Catalyzes the transfer of the enolpyruvyl moiety of phosphoenolpyruvate (PEP) to the 5-hydroxyl of shikimate-3-phosphate (S3P) to produce enolpyruvyl shikimate-3-phosphate and inorganic phosphate. This chain is 3-phosphoshikimate 1-carboxyvinyltransferase, found in Sulfurihydrogenibium sp. (strain YO3AOP1).